The sequence spans 347 residues: Tsukushi (347 aa).

The N-terminal stretch at 1 to 19 (MASLLCLFFSLLGLAAIGA) is a signal peptide. Residues 20 to 61 (VKNCHPQCRCEVETFGLFDSFSLTKVDCSRIGPGNTPVPIPL) enclose the LRRNT domain. LRR repeat units lie at residues 62-83 (DTSH…MLSG), 88-109 (TLVS…AFSK), 112-133 (YLET…CFTG), 135-156 (PLVE…LFTT), 160-175 (DLPI…LTSI), 185-205 (YIKS…LNGI), 206-227 (PLQY…AFDS), 230-252 (ELVH…AFRS), 255-277 (NLQA…VFSG), and 280-301 (SLQE…VFMQ). Asparagine 285 is a glycosylation site (N-linked (GlcNAc...) asparagine).

Forms a ternary complex with chordin/CHRD and BMP4.

The protein localises to the secreted. Functionally, contributes to various developmental events through its interactions with multiple signaling pathways. Dorsalizing factor which functions as an inhibitor of bone morphogenetic proteins during gastrulation. In Danio rerio (Zebrafish), this protein is Tsukushi (tsku).